The chain runs to 103 residues: N(4)-acetylcytidine amidohydrolase (103 aa).

The 95-residue stretch at 6-100 folds into the ASCH domain; that stretch reads ITFFQRFQED…AEDRFYVIEF (95 aa). The active-site Proton acceptor is lysine 21. Threonine 24 serves as the catalytic Nucleophile. The active-site Proton donor is glutamate 74.

The protein belongs to the N(4)-acetylcytidine amidohydrolase family.

The catalysed reaction is N(4)-acetylcytidine + H2O = cytidine + acetate + H(+). The enzyme catalyses N(4)-acetyl-2'-deoxycytidine + H2O = 2'-deoxycytidine + acetate + H(+). It carries out the reaction N(4)-acetylcytosine + H2O = cytosine + acetate + H(+). In terms of biological role, catalyzes the hydrolysis of N(4)-acetylcytidine (ac4C). This is N(4)-acetylcytidine amidohydrolase from Klebsiella pneumoniae (strain 342).